A 352-amino-acid polypeptide reads, in one-letter code: Macrophage-capping protein (352 aa).

Met-1 is modified (N-acetylmethionine). The Gelsolin-like 1 repeat unit spans residues 27–75 (EKLKPVPIARESHGIFFSGDSYLVLHNGPEEASHLHLWIGQQSSRDEQG). Residues 139–148 (RKLYQVKGKK) carry the Nuclear localization signal motif. Gelsolin-like repeat units follow at residues 150 to 190 (IRAT…LERN) and 265 to 311 (MNLT…KERQ). Ser-341 carries the phosphoserine modification.

Belongs to the villin/gelsolin family. As to quaternary structure, interacts with NUP62. Interacts with NUTF2 and RAN; involved in CAPG nuclear import. Phosphorylated. Nuclear GCAP39 is more highly phosphorylated than cytoplasmic GCAP39. Present in a large variety of tissues and is particularly abundant in kidney and lung. Highly expressed in macrophages (at protein level).

Its subcellular location is the nucleus. It is found in the cytoplasm. The protein localises to the melanosome. It localises to the cell projection. The protein resides in the lamellipodium. Its subcellular location is the ruffle. In terms of biological role, calcium-sensitive protein which reversibly blocks the barbed ends of actin filaments but does not sever preformed actin filaments. May play an important role in macrophage function. May play a role in regulating cytoplasmic and/or nuclear structures through potential interactions with actin. May bind DNA. Uncapping occurs either when Ca(2+) falls or when the concentration of polyphosphoinositide rises, both at low and high Ca(2+). This chain is Macrophage-capping protein (Capg), found in Mus musculus (Mouse).